A 258-amino-acid chain; its full sequence is UPF0758 protein BamMC406_2419 (258 aa).

The disordered stretch occupies residues 13 to 42; it reads CRDPADAPAAPARHTGPARPRKRRPRNWKP. Positions 31–42 are enriched in basic residues; that stretch reads RPRKRRPRNWKP. One can recognise an MPN domain in the interval 136–258; it reads QIDSPGAVED…TFSFARAGWL (123 aa). Positions 207, 209, and 220 each coordinate Zn(2+). A JAMM motif motif is present at residues 207–220; it reads HNHPSGAVQPSAED.

It belongs to the UPF0758 family.

The chain is UPF0758 protein BamMC406_2419 from Burkholderia ambifaria (strain MC40-6).